We begin with the raw amino-acid sequence, 141 residues long: Large ribosomal subunit protein uL11 (141 aa).

The protein belongs to the universal ribosomal protein uL11 family. As to quaternary structure, part of the ribosomal stalk of the 50S ribosomal subunit. Interacts with L10 and the large rRNA to form the base of the stalk. L10 forms an elongated spine to which L12 dimers bind in a sequential fashion forming a multimeric L10(L12)X complex. Post-translationally, one or more lysine residues are methylated.

Its function is as follows. Forms part of the ribosomal stalk which helps the ribosome interact with GTP-bound translation factors. The chain is Large ribosomal subunit protein uL11 from Levilactobacillus brevis (strain ATCC 367 / BCRC 12310 / CIP 105137 / JCM 1170 / LMG 11437 / NCIMB 947 / NCTC 947) (Lactobacillus brevis).